The sequence spans 377 residues: Cilia- and flagella-associated protein 263 (377 aa).

Coiled coils occupy residues 95-139 (LTVE…ADIR) and 169-355 (QKVM…LKGY).

It belongs to the CFAP263 family. In terms of assembly, forms a complex with CFAP184; the interaction is required for functional activity in cilia. Interacts with HAP1 and PCM1.

Its subcellular location is the cytoplasm. The protein resides in the cytoskeleton. The protein localises to the microtubule organizing center. It localises to the centrosome. It is found in the centriolar satellite. Its subcellular location is the cell projection. The protein resides in the cilium. Its function is as follows. Component of centriolar satellites contributing to primary cilium formation. In complex with CFAP263, acts as a regulator of ciliary beating that connects radial spoke 3 (RS3) to the inner dynein arm (IDA) and the nexin-dynein regulatory complex (N-DRC). The complex is positioned parallel to N-DRC and forms a connection between the arch at the base of RS3, the IDA tail and N-DRC. This is Cilia- and flagella-associated protein 263 (Cfap263) from Mus musculus (Mouse).